The following is a 384-amino-acid chain: Substance-K receptor (384 aa).

Topologically, residues 1–32 are extracellular; sequence MGGRAIVTDTNIFSGLESNTTGVTAFSMPAWQ. An N-linked (GlcNAc...) asparagine glycan is attached at Asn-19. The chain crosses the membrane as a helical span at residues 33–56; it reads LALWATAYLGLVLVAVTGNATVIW. Residues 57 to 69 are Cytoplasmic-facing; the sequence is IILAHERMRTVTN. Residues 70 to 90 traverse the membrane as a helical segment; that stretch reads YFIINLALADLCMAAFNATFN. The Extracellular segment spans residues 91-107; it reads FVYASHNIWYFGRAFCY. Cysteines 106 and 181 form a disulfide. The chain crosses the membrane as a helical span at residues 108 to 129; it reads FQNLFPITAMFVSIYSMTAIAA. At 130-149 the chain is on the cytoplasmic side; that stretch reads DRYMAIVHPFQPRLSAPITK. A helical membrane pass occupies residues 150-170; sequence ATIAGIWLVALALASPQCFYS. Residues 171 to 196 lie on the Extracellular side of the membrane; that stretch reads TITVDQGATKCVVAWPNDNGGKMLLL. Residues 197–218 form a helical membrane-spanning segment; that stretch reads YHLVVFVLVYFLPLVVMFVAYS. The Cytoplasmic segment spans residues 219–251; the sequence is VIGLTLWKRAVPRHQAHGANLRHLHAKKKFVKA. Residues 252 to 272 form a helical membrane-spanning segment; sequence MVLVVLTFAICWLPYHLYFIL. Residues 273-290 are Extracellular-facing; that stretch reads GSFQKDIYYRKFIQQVYL. A helical membrane pass occupies residues 291-310; that stretch reads ALFWLAMSSTMYNPIIYCCL. Over 311-384 the chain is Cytoplasmic; sequence NHRFRSGFRL…SPQDVEPAAP (74 aa). A lipid anchor (S-palmitoyl cysteine) is attached at Cys-324.

This sequence belongs to the G-protein coupled receptor 1 family.

The protein resides in the cell membrane. Its function is as follows. This is a receptor for the tachykinin neuropeptide substance K (neurokinin A). It is associated with G proteins that activate a phosphatidylinositol-calcium second messenger system. The rank order of affinity of this receptor to tachykinins is: substance K &gt; neuromedin-K &gt; substance P. The chain is Substance-K receptor (TACR2) from Mesocricetus auratus (Golden hamster).